The primary structure comprises 790 residues: Kinesin-like protein KIF9 (790 aa).

The 335-residue stretch at 6-340 (KVQAFVRVRP…LRFASRMKLV (335 aa)) folds into the Kinesin motor domain. ATP is bound by residues 12–14 (RVR) and 93–100 (GQTGAGKT). Residues 342 to 442 (TEPAINEKYD…EQEVESALRR (101 aa)) are a coiled coil. Residues 482-521 (GVAPFSVKPGKKPKTKKTPKDQFSSSARKEGASSPVSGKD) are disordered. T530 is modified (phosphothreonine). Positions 547-577 (RERETSSIEPLISDSPKEELRAPRPSTPPSR) are disordered. A coiled-coil region spans residues 600–695 (KSILNERKKR…YCQRLVDQCR (96 aa)).

The protein belongs to the TRAFAC class myosin-kinesin ATPase superfamily. Kinesin family. Interacts with HYDIN. As to expression, highly expressed in the testis (at protein level). Weakly expressed in the brain, thymus, lung and heart.

Its subcellular location is the cytoplasm. It localises to the cytoskeleton. It is found in the cell projection. The protein localises to the cilium. The protein resides in the flagellum. Its subcellular location is the flagellum axoneme. Functionally, essential for normal male fertility and for progressive motility of spermatozoa. The chain is Kinesin-like protein KIF9 (Kif9) from Mus musculus (Mouse).